Reading from the N-terminus, the 154-residue chain is Ribonuclease H (154 aa).

An RNase H type-1 domain is found at 1-141 (MKRIEAYTDG…ADELAREGME (141 aa)). The Mg(2+) site is built by aspartate 9, glutamate 47, aspartate 69, and aspartate 133.

The protein belongs to the RNase H family. As to quaternary structure, monomer. It depends on Mg(2+) as a cofactor.

The protein resides in the cytoplasm. The catalysed reaction is Endonucleolytic cleavage to 5'-phosphomonoester.. Its function is as follows. Endonuclease that specifically degrades the RNA of RNA-DNA hybrids. This is Ribonuclease H from Brucella anthropi (strain ATCC 49188 / DSM 6882 / CCUG 24695 / JCM 21032 / LMG 3331 / NBRC 15819 / NCTC 12168 / Alc 37) (Ochrobactrum anthropi).